The primary structure comprises 459 residues: RuvB-like helicase 1 (459 aa).

75 to 82 (GGPSTGKT) serves as a coordination point for ATP.

This sequence belongs to the RuvB family. As to quaternary structure, may form heterododecamers with RVB2. Component of the SWR1 chromatin remodeling complex, the INO80 chromatin remodeling complex, and of the R2TP complex.

It is found in the nucleus. The catalysed reaction is ATP + H2O = ADP + phosphate + H(+). In terms of biological role, DNA helicase which participates in several chromatin remodeling complexes, including the SWR1 and the INO80 complexes. The SWR1 complex mediates the ATP-dependent exchange of histone H2A for the H2A variant HZT1 leading to transcriptional regulation of selected genes by chromatin remodeling. The INO80 complex remodels chromatin by shifting nucleosomes and is involved in DNA repair. Also involved in pre-rRNA processing. The protein is RuvB-like helicase 1 (RVB1) of Eremothecium gossypii (strain ATCC 10895 / CBS 109.51 / FGSC 9923 / NRRL Y-1056) (Yeast).